We begin with the raw amino-acid sequence, 358 residues long: Protein RecA (358 aa).

An ATP-binding site is contributed by 69-76; sequence GPESSGKT.

It belongs to the RecA family.

It localises to the cytoplasm. Its function is as follows. Can catalyze the hydrolysis of ATP in the presence of single-stranded DNA, the ATP-dependent uptake of single-stranded DNA by duplex DNA, and the ATP-dependent hybridization of homologous single-stranded DNAs. It interacts with LexA causing its activation and leading to its autocatalytic cleavage. This Trichormus variabilis (strain ATCC 29413 / PCC 7937) (Anabaena variabilis) protein is Protein RecA.